Consider the following 104-residue polypeptide: Large ribosomal subunit protein uL24 (104 aa).

It belongs to the universal ribosomal protein uL24 family. Part of the 50S ribosomal subunit.

One of two assembly initiator proteins, it binds directly to the 5'-end of the 23S rRNA, where it nucleates assembly of the 50S subunit. Its function is as follows. One of the proteins that surrounds the polypeptide exit tunnel on the outside of the subunit. The sequence is that of Large ribosomal subunit protein uL24 from Shigella flexneri.